We begin with the raw amino-acid sequence, 230 residues long: Phosphoglycerate mutase-like protein 4 (230 aa).

The Tele-phosphohistidine intermediate role is filled by His21. Glu96 serves as the catalytic Proton donor/acceptor.

Belongs to the phosphoglycerate mutase family.

Functionally, may play a role in carbohydrates metabolism. The protein is Phosphoglycerate mutase-like protein 4 of Arabidopsis thaliana (Mouse-ear cress).